The sequence spans 427 residues: Glutamate-1-semialdehyde 2,1-aminomutase (427 aa).

K265 is modified (N6-(pyridoxal phosphate)lysine).

This sequence belongs to the class-III pyridoxal-phosphate-dependent aminotransferase family. HemL subfamily. In terms of assembly, homodimer. The cofactor is pyridoxal 5'-phosphate.

The protein localises to the cytoplasm. The enzyme catalyses (S)-4-amino-5-oxopentanoate = 5-aminolevulinate. It functions in the pathway porphyrin-containing compound metabolism; protoporphyrin-IX biosynthesis; 5-aminolevulinate from L-glutamyl-tRNA(Glu): step 2/2. The chain is Glutamate-1-semialdehyde 2,1-aminomutase from Burkholderia ambifaria (strain ATCC BAA-244 / DSM 16087 / CCUG 44356 / LMG 19182 / AMMD) (Burkholderia cepacia (strain AMMD)).